An 835-amino-acid chain; its full sequence is Adhesion G protein-coupled receptor E5 (835 aa).

Residues 1–20 (MGGRVFLAFCVWLTLPGAET) form the signal peptide. Topologically, residues 21–552 (QDSRGCARWC…EDWKLTLITR (532 aa)) are extracellular. One can recognise an EGF-like 1 domain in the interval 22 to 63 (DSRGCARWCPQNSSCVNATACRCNPGFSSFSEIITTPTETCD). 15 disulfides stabilise this stretch: Cys-26/Cys-36, Cys-30/Cys-42, Cys-44/Cys-62, Cys-68/Cys-82, Cys-76/Cys-91, Cys-93/Cys-114, Cys-120/Cys-133, Cys-127/Cys-142, Cys-144/Cys-158, Cys-164/Cys-177, Cys-171/Cys-186, Cys-188/Cys-207, Cys-213/Cys-226, Cys-220/Cys-235, and Cys-237/Cys-256. Asn-33 and Asn-38 each carry an N-linked (GlcNAc...) asparagine glycan. An EGF-like 2; calcium-binding domain is found at 64–115 (DINECATPSKVSCGKFSDCWNTEGSYDCVCSPGYEPVSGAKTFKNESENTCQ). A glycan (N-linked (GlcNAc...) asparagine) is linked at Asn-108. An EGF-like 3; calcium-binding domain is found at 116 to 159 (DVDECQQNPRLCKSYGTCVNTLGSYTCQCLPGFKFIPEDPKVCT). The 49-residue stretch at 160–208 (DVNECTSGQNPCHSSTHCLNNVGSYQCRCRPGWQPIPGSPNGPNNTVCE) folds into the EGF-like 4; calcium-binding domain. The N-linked (GlcNAc...) asparagine glycan is linked to Asn-203. An EGF-like 5; calcium-binding domain is found at 209–257 (DVDECSSGQHQCDSSTVCFNTVGSYSCRCRPGWKPRHGIPNNQKDTVCE). The GAIN-B domain occupies 349 to 543 (PFTYISPSNT…AILMAHYDVE (195 aa)). 5 N-linked (GlcNAc...) asparagine glycosylation sites follow: Asn-371, Asn-406, Asn-413, Asn-453, and Asn-520. Disulfide bonds link Cys-495-Cys-525 and Cys-513-Cys-527. Positions 495-543 (CAFWKSDSDRGGHWATEGCQVLGSKNGSTTCQCSHLSSFAILMAHYDVE) are GPS. A helical transmembrane segment spans residues 553–572 (VGLALSLFCLLLCILTFLLV). The Cytoplasmic segment spans residues 573 to 581 (RPIQGSRTT). A helical membrane pass occupies residues 582–601 (IHLHLCICLFVGSTIFLAGI). Over 602–620 (ENEGGQVGLRCRLVAGLLH) the chain is Extracellular. A helical membrane pass occupies residues 621–642 (YCFLAAFCWMSLEGLELYFLVV). Residues 643–653 (RVFQGQGLSTR) are Cytoplasmic-facing. A helical transmembrane segment spans residues 654 to 674 (WLCLIGYGVPLLIVGVSAAIY). Residues 675 to 691 (SKGYGRPRYCWLDFEQG) lie on the Extracellular side of the membrane. Residues 692-712 (FLWSFLGPVTFIILCNAVIFV) traverse the membrane as a helical segment. Residues 713-739 (TTVWKLTQKFSEINPDMKKLKKARALT) lie on the Cytoplasmic side of the membrane. The chain crosses the membrane as a helical span at residues 740 to 760 (ITAIAQLFLLGCTWVFGLFIF). At 761 to 766 (DDRSLV) the chain is on the extracellular side. A helical membrane pass occupies residues 767–789 (LTYVFTILNCLQGAFLYLLHCLL). Residues 790–835 (NKKVREEYRKWACLVAGGSKYSEFTSTTSGTGHNQTRALRASESGI) are Cytoplasmic-facing. Residues 814–826 (TSTTSGTGHNQTR) show a composition bias toward polar residues. A disordered region spans residues 814–835 (TSTTSGTGHNQTRALRASESGI). Ser-815 is modified (phosphoserine). Thr-816 carries the phosphothreonine modification. Ser-818 bears the Phosphoserine mark. Thr-825 bears the Phosphothreonine mark. 2 positions are modified to phosphoserine: Ser-831 and Ser-833.

The protein belongs to the G-protein coupled receptor 2 family. LN-TM7 subfamily. In terms of assembly, forms a heterodimer, consisting of a large extracellular region (alpha subunit) non-covalently linked to a seven-transmembrane moiety (beta subunit). Interacts with complement decay-accelerating factor (DAF). The largest isoform (isoform 1) interacts with chondroitin sulfate. Proteolytically cleaved into 2 subunits, an extracellular alpha subunit and a seven-transmembrane subunit. In terms of tissue distribution, broadly expressed, found on most hematopoietic cells, including activated lymphocytes, monocytes, macrophages, dendritic cells, and granulocytes. Expressed also abundantly by smooth muscle cells. Expressed in thyroid, colorectal, gastric, esophageal and pancreatic carcinomas too. Expression are increased under inflammatory conditions in the CNS of multiple sclerosis and in synovial tissue of patients with rheumatoid arthritis. Increased expression of CD97 in the synovium is accompanied by detectable levels of soluble CD97 in the synovial fluid.

The protein resides in the cell membrane. It localises to the secreted. It is found in the extracellular space. Functionally, receptor potentially involved in both adhesion and signaling processes early after leukocyte activation. Plays an essential role in leukocyte migration. This chain is Adhesion G protein-coupled receptor E5, found in Homo sapiens (Human).